A 164-amino-acid polypeptide reads, in one-letter code: MLYCVQFGRRVIRLVSATVHGFFLTLLAMFKPKVTLRYPHEKGPLSTRFRGEHALRRYESGEERCIACKLCEAICPAQAITIEAEERSDGSRRTTRYDIDMTKCIYCGFCQEACPVDAIVEGPNFEYSTETREELMYNKEKLLANGDIWEEALRYRIKKNQPYY.

4Fe-4S ferredoxin-type domains are found at residues 56–85 (RRYE…IEAE) and 95–124 (TRYD…EGPN). Positions 65, 68, 71, 75, 104, 107, 110, and 114 each coordinate [4Fe-4S] cluster.

It belongs to the complex I 23 kDa subunit family. In terms of assembly, NDH-1 is composed of 14 different subunits. Subunits NuoA, H, J, K, L, M, N constitute the membrane sector of the complex. It depends on [4Fe-4S] cluster as a cofactor.

It is found in the cell inner membrane. It carries out the reaction a quinone + NADH + 5 H(+)(in) = a quinol + NAD(+) + 4 H(+)(out). NDH-1 shuttles electrons from NADH, via FMN and iron-sulfur (Fe-S) centers, to quinones in the respiratory chain. The immediate electron acceptor for the enzyme in this species is believed to be ubiquinone. Couples the redox reaction to proton translocation (for every two electrons transferred, four hydrogen ions are translocated across the cytoplasmic membrane), and thus conserves the redox energy in a proton gradient. This chain is NADH-quinone oxidoreductase subunit I, found in Anaplasma phagocytophilum (strain HZ).